We begin with the raw amino-acid sequence, 487 residues long: FAD-dependent oxidoreductase domain-containing protein 1 (487 aa).

A helical membrane pass occupies residues 62-82 (EQADVVIIGGGILGLSVAFWL).

In terms of assembly, associates with components of the mitochondrial respiratory chain complex I. It depends on FAD as a cofactor.

The protein resides in the mitochondrion inner membrane. In terms of biological role, required for the assembly of the mitochondrial membrane respiratory chain NADH dehydrogenase (Complex I). Involved in mid-late stages of complex I assembly. This chain is FAD-dependent oxidoreductase domain-containing protein 1 (Foxred1), found in Mus musculus (Mouse).